The following is a 309-amino-acid chain: Acetylglutamate kinase (309 aa).

Residues G82–G83, R104, and N206 contribute to the substrate site.

The protein belongs to the acetylglutamate kinase family. ArgB subfamily.

It localises to the cytoplasm. It catalyses the reaction N-acetyl-L-glutamate + ATP = N-acetyl-L-glutamyl 5-phosphate + ADP. The protein operates within amino-acid biosynthesis; L-arginine biosynthesis; N(2)-acetyl-L-ornithine from L-glutamate: step 2/4. Its function is as follows. Catalyzes the ATP-dependent phosphorylation of N-acetyl-L-glutamate. The sequence is that of Acetylglutamate kinase from Cupriavidus pinatubonensis (strain JMP 134 / LMG 1197) (Cupriavidus necator (strain JMP 134)).